The following is a 376-amino-acid chain: Cysteine proteinase 2 (376 aa).

An N-terminal signal peptide occupies residues 1-18; sequence MRLLVFLILLIFVNFSFA. Positions 19 to 122 are cleaved as a propeptide — activation peptide; it reads NVRPNGRRFS…EVLNVEDLQT (104 aa). Disulfide bonds link cysteine 144-cysteine 187, cysteine 178-cysteine 221, and cysteine 279-cysteine 365. The active site involves cysteine 147. Catalysis depends on residues histidine 286 and asparagine 343.

This sequence belongs to the peptidase C1 family.

The protein resides in the lysosome. In terms of biological role, cysteine proteinases 1 and 2 are believed to participate in the breakdown of protein during differentiation of Dictyostelium as a response to starvation. This is Cysteine proteinase 2 (cprB) from Dictyostelium discoideum (Social amoeba).